Reading from the N-terminus, the 289-residue chain is ATP synthase gamma chain (289 aa).

This sequence belongs to the ATPase gamma chain family. As to quaternary structure, F-type ATPases have 2 components, CF(1) - the catalytic core - and CF(0) - the membrane proton channel. CF(1) has five subunits: alpha(3), beta(3), gamma(1), delta(1), epsilon(1). CF(0) has three main subunits: a, b and c.

It localises to the cell membrane. Produces ATP from ADP in the presence of a proton gradient across the membrane. The gamma chain is believed to be important in regulating ATPase activity and the flow of protons through the CF(0) complex. In Hamiltonella defensa subsp. Acyrthosiphon pisum (strain 5AT), this protein is ATP synthase gamma chain.